Consider the following 93-residue polypeptide: Phosphoribosyl-ATP pyrophosphatase (93 aa).

The protein belongs to the PRA-PH family.

The protein resides in the cytoplasm. It carries out the reaction 1-(5-phospho-beta-D-ribosyl)-ATP + H2O = 1-(5-phospho-beta-D-ribosyl)-5'-AMP + diphosphate + H(+). It participates in amino-acid biosynthesis; L-histidine biosynthesis; L-histidine from 5-phospho-alpha-D-ribose 1-diphosphate: step 2/9. In Metallosphaera sedula (strain ATCC 51363 / DSM 5348 / JCM 9185 / NBRC 15509 / TH2), this protein is Phosphoribosyl-ATP pyrophosphatase.